We begin with the raw amino-acid sequence, 274 residues long: Diaminopimelate epimerase (274 aa).

Substrate-binding residues include Asn13, Gln47, and Asn65. The active-site Proton donor is the Cys74. Substrate contacts are provided by residues 75-76 (GN), Asn149, Asn182, and 200-201 (ER). The active-site Proton acceptor is Cys209. Residue 210-211 (GT) coordinates substrate.

The protein belongs to the diaminopimelate epimerase family. As to quaternary structure, homodimer.

The protein localises to the cytoplasm. It carries out the reaction (2S,6S)-2,6-diaminopimelate = meso-2,6-diaminopimelate. The protein operates within amino-acid biosynthesis; L-lysine biosynthesis via DAP pathway; DL-2,6-diaminopimelate from LL-2,6-diaminopimelate: step 1/1. In terms of biological role, catalyzes the stereoinversion of LL-2,6-diaminopimelate (L,L-DAP) to meso-diaminopimelate (meso-DAP), a precursor of L-lysine and an essential component of the bacterial peptidoglycan. The sequence is that of Diaminopimelate epimerase from Rhizorhabdus wittichii (strain DSM 6014 / CCUG 31198 / JCM 15750 / NBRC 105917 / EY 4224 / RW1) (Sphingomonas wittichii).